A 743-amino-acid chain; its full sequence is Catalase-peroxidase (743 aa).

The interval 1–29 (MNAESGENAGGGCPLGHGAGAPRKRPSNR) is disordered. A compositionally biased stretch (gly residues) spans 8–19 (NAGGGCPLGHGA). Residues 100–222 (WHSAGTYRIT…LGAVQMGLIY (123 aa)) constitute a cross-link (tryptophyl-tyrosyl-methioninium (Trp-Tyr) (with M-248)). The Proton acceptor role is filled by H101. The segment at residues 222 to 248 (YVNPEGPNGNPDPKAAAVDIRETFARM) is a cross-link (tryptophyl-tyrosyl-methioninium (Tyr-Met) (with W-100)). H263 provides a ligand contact to heme b.

It belongs to the peroxidase family. Peroxidase/catalase subfamily. Homodimer or homotetramer. Heme b is required as a cofactor. Formation of the three residue Trp-Tyr-Met cross-link is important for the catalase, but not the peroxidase activity of the enzyme.

The catalysed reaction is H2O2 + AH2 = A + 2 H2O. The enzyme catalyses 2 H2O2 = O2 + 2 H2O. Bifunctional enzyme with both catalase and broad-spectrum peroxidase activity. The polypeptide is Catalase-peroxidase (Stutzerimonas stutzeri (strain A1501) (Pseudomonas stutzeri)).